The chain runs to 230 residues: MAQATPKADSQRGRFITFEGGEGSGKSTQIRILAERLQAAKLRAIVTREPGGSPGAEIIRHLVLSGVGKLLGADAETLLFAAARDDHVHTVIKPALEQGIWVLCDRFADSTRVYQGQLGNVLPGVLNAMERVTIGDLKPDLTVILDVPVEVGLQRAAARRGSGAPDRFEAEDIAFHRKLRDAYRAIAASDPQRCVVIDADADLDAVAARVWAALHDRALTADAATKASRA.

20 to 27 contacts ATP; the sequence is GGEGSGKS.

It belongs to the thymidylate kinase family.

It catalyses the reaction dTMP + ATP = dTDP + ADP. Functionally, phosphorylation of dTMP to form dTDP in both de novo and salvage pathways of dTTP synthesis. The sequence is that of Thymidylate kinase from Nitrobacter winogradskyi (strain ATCC 25391 / DSM 10237 / CIP 104748 / NCIMB 11846 / Nb-255).